Here is a 204-residue protein sequence, read N- to C-terminus: Phosphoribosyl-dephospho-CoA transferase (204 aa).

Catalysis depends on residues D129 and D131.

This sequence belongs to the MdcG family.

The enzyme catalyses apo-[malonate decarboxylase ACP] + 2'-(5''-triphospho-alpha-D-ribosyl)-3'-dephospho-CoA = holo-[malonate decarboxylase ACP] + diphosphate. Its function is as follows. Transfers 2'-(5-triphosphoribosyl)-3'-dephosphocoenzyme-A to the apo-[acyl-carrier-protein] of the malonate decarboxylase to yield holo-[acyl-carrier-protein]. This Pseudomonas putida (Arthrobacter siderocapsulatus) protein is Phosphoribosyl-dephospho-CoA transferase.